Consider the following 81-residue polypeptide: Protein Vpu (81 aa).

The Extracellular portion of the chain corresponds to 1–7 (MQPLQIL). A helical membrane pass occupies residues 8 to 28 (SIVALVVAAIIAIVVWSIVFI). Over 29 to 81 (LIRKILRQRKIDRLIDRIRERAEDSGNESEGIRKELSALVEMGHDAPGDIDDL) the chain is Cytoplasmic. Phosphoserine; by host CK2 occurs at positions 53 and 57.

The protein belongs to the HIV-1 VPU protein family. Homopentamer. Interacts with host CD4 and BRTC; these interactions induce proteasomal degradation of CD4. Interacts with host BST2; this interaction leads to the degradation of host BST2. Interacts with host FBXW11. Interacts with host AP1M1; this interaction plays a role in the mistrafficking and subsequent degradation of host BST2. Interacts with host RANBP2; this interaction allows Vpu to down-regulate host BLM sumoylation. Post-translationally, phosphorylated by host CK2. This phosphorylation is necessary for interaction with human BTRC and degradation of CD4.

It is found in the host membrane. Ion channel activity is inhibited by hexamethylene amiloride in vitro. In terms of biological role, enhances virion budding by targeting host CD4 and Tetherin/BST2 to proteasome degradation. Degradation of CD4 prevents any unwanted premature interactions between viral Env and its host receptor CD4 in the endoplasmic reticulum. Degradation of antiretroviral protein Tetherin/BST2 is important for virion budding, as BST2 tethers new viral particles to the host cell membrane. Mechanistically, Vpu bridges either CD4 or BST2 to BTRC, a substrate recognition subunit of the Skp1/Cullin/F-box protein E3 ubiquitin ligase, induces their ubiquitination and subsequent proteasomal degradation. The alteration of the E3 ligase specificity by Vpu seems to promote the degradation of host IKBKB, leading to NF-kappa-B down-regulation and subsequent apoptosis. Acts as a viroporin that forms an oligomeric ion channel in membranes. Modulates the host DNA repair mechanisms to promote degradation of nuclear viral cDNA in cells that are already productively infected in order to suppress immune sensing and proviral hyper-integration (superinfection). Manipulates PML-NBs and modulates SUMOylation of host BLM protein thereby enhancing its DNA-end processing activity toward viral unintegrated linear DNA. Also inhibits RAD52-mediated homologous repair of viral cDNA, preventing the generation of dead-end circular forms of single copies of the long terminal repeat and permitting sustained nucleolytic attack. The protein is Protein Vpu of Homo sapiens (Human).